We begin with the raw amino-acid sequence, 89 residues long: Small ribosomal subunit protein uS15 (89 aa).

This sequence belongs to the universal ribosomal protein uS15 family. In terms of assembly, part of the 30S ribosomal subunit. Forms a bridge to the 50S subunit in the 70S ribosome, contacting the 23S rRNA.

Its function is as follows. One of the primary rRNA binding proteins, it binds directly to 16S rRNA where it helps nucleate assembly of the platform of the 30S subunit by binding and bridging several RNA helices of the 16S rRNA. In terms of biological role, forms an intersubunit bridge (bridge B4) with the 23S rRNA of the 50S subunit in the ribosome. The polypeptide is Small ribosomal subunit protein uS15 (Paracoccus denitrificans (strain Pd 1222)).